The sequence spans 367 residues: MKKKKEYRIAVLPGDGIGPEVMQEAYKILNVINKKFDFNIYTNEYDIGGIAIDKYGAPLPKKTLNGCIESHAILFGSIGGKEWTHLPADEQPERGGLLPLRKFFNLFVNLRPIKLHFSLKKLSPLKKEIIQDGFDILCVRELIGGIYFGLPKGKNTFDKKNISAFDTEIYSTKEIEKIADIAFQLSLKRKKKVFSIDKANVLESSMLWREVVIQVSKRYPNVELIHLYIDNAAMQLIKNPNQFDVILCSNLFGDILSDECAALTGSLGMLPSASLNESFFGLFEPAGGSAPDLKGKNIANPIAQILSLALLFKYSLQLEKISHLIELSVLKTLEKGYRTLDISNGKKYITTDQMGNYIAKTLSELIN.

An NAD(+)-binding site is contributed by 80–93 (GKEWTHLPADEQPE). R101, R111, R140, and D230 together coordinate substrate. Mg(2+)-binding residues include D230, D254, and D258. 288 to 300 (GSAPDLKGKNIAN) contributes to the NAD(+) binding site.

Belongs to the isocitrate and isopropylmalate dehydrogenases family. LeuB type 1 subfamily. In terms of assembly, homodimer. The cofactor is Mg(2+). Mn(2+) serves as cofactor.

Its subcellular location is the cytoplasm. The catalysed reaction is (2R,3S)-3-isopropylmalate + NAD(+) = 4-methyl-2-oxopentanoate + CO2 + NADH. It participates in amino-acid biosynthesis; L-leucine biosynthesis; L-leucine from 3-methyl-2-oxobutanoate: step 3/4. Catalyzes the oxidation of 3-carboxy-2-hydroxy-4-methylpentanoate (3-isopropylmalate) to 3-carboxy-4-methyl-2-oxopentanoate. The product decarboxylates to 4-methyl-2 oxopentanoate. This Buchnera aphidicola subsp. Cinara cedri (strain Cc) protein is 3-isopropylmalate dehydrogenase (leuB).